Reading from the N-terminus, the 363-residue chain is Biotin synthase (363 aa).

The Radical SAM core domain occupies 40-268; sequence NVVQVSTLLS…ETQVRLSAGR (229 aa). [4Fe-4S] cluster-binding residues include cysteine 55, cysteine 59, and cysteine 62. Positions 99, 131, 191, and 263 each coordinate [2Fe-2S] cluster.

The protein belongs to the radical SAM superfamily. Biotin synthase family. Homodimer. It depends on [4Fe-4S] cluster as a cofactor. [2Fe-2S] cluster is required as a cofactor.

The catalysed reaction is (4R,5S)-dethiobiotin + (sulfur carrier)-SH + 2 reduced [2Fe-2S]-[ferredoxin] + 2 S-adenosyl-L-methionine = (sulfur carrier)-H + biotin + 2 5'-deoxyadenosine + 2 L-methionine + 2 oxidized [2Fe-2S]-[ferredoxin]. It participates in cofactor biosynthesis; biotin biosynthesis; biotin from 7,8-diaminononanoate: step 2/2. Functionally, catalyzes the conversion of dethiobiotin (DTB) to biotin by the insertion of a sulfur atom into dethiobiotin via a radical-based mechanism. This chain is Biotin synthase, found in Flavobacterium johnsoniae (strain ATCC 17061 / DSM 2064 / JCM 8514 / BCRC 14874 / CCUG 350202 / NBRC 14942 / NCIMB 11054 / UW101) (Cytophaga johnsonae).